The chain runs to 449 residues: Capsid protein (449 aa).

The interval 1 to 43 is DNA-binding; it reads MARRARRPRGRFYAFRRGRWHNLKRLRRRYKFRHRRRQRYRRR. The interval 6–47 is nuclear localization signals; the sequence is RRPRGRFYAFRRGRWHNLKRLRRRYKFRHRRRQRYRRRAFRK.

The protein belongs to the gyrovirus capsid protein family. As to quaternary structure, homomultimer (Potential). Interacts with Rep; this interaction relocates Rep into the nucleus.

Its subcellular location is the host nucleus. The protein localises to the virion. Its function is as follows. Self-assembles to form the virion icosahedral capsid with a T=1 symmetry. This very small capsid (25 nm in diameter) allows the virus to be very stable in the environment and resistant to some disinfectants, including detergents. Essential for the initial attachment to host receptors. After attachment, the virus is endocytosed and traffics to the nucleus. The capsid protein binds and transports the viral genome and Rep across the nuclear envelope. This is Capsid protein (VP1) from Chicken anemia virus (isolate USA CIA-1) (CAV).